Here is an 87-residue protein sequence, read N- to C-terminus: Acetolactate synthase isozyme 2 small subunit (87 aa).

In terms of domain architecture, ACT spans 5 to 78; sequence QVNVSARFNP…DVAHVAICQS (74 aa).

In terms of assembly, tetramer of two large and two small chains. Mg(2+) is required as a cofactor. The cofactor is thiamine diphosphate.

The enzyme catalyses 2 pyruvate + H(+) = (2S)-2-acetolactate + CO2. The protein operates within amino-acid biosynthesis; L-isoleucine biosynthesis; L-isoleucine from 2-oxobutanoate: step 1/4. It functions in the pathway amino-acid biosynthesis; L-valine biosynthesis; L-valine from pyruvate: step 1/4. In Escherichia coli O6:H1 (strain CFT073 / ATCC 700928 / UPEC), this protein is Acetolactate synthase isozyme 2 small subunit (ilvM).